Consider the following 230-residue polypeptide: uncharacterized protein (230 aa).

Catalysis depends on charge relay system residues Ser-124 and His-158.

This sequence belongs to the peptidase S51 family.

This is an uncharacterized protein from Bacillus subtilis (strain 168).